The sequence spans 300 residues: Probable lipid kinase YegS-like (300 aa).

A DAGKc domain is found at 1–129 (MSKKALLILH…CDVIRVNNHY (129 aa)). ATP-binding positions include Thr38, 64-70 (GDGSVRD), and Thr92. Positions 210, 213, and 215 each coordinate Mg(2+). Catalysis depends on Glu272, which acts as the Proton acceptor.

The protein belongs to the diacylglycerol/lipid kinase family. YegS lipid kinase subfamily. It depends on Mg(2+) as a cofactor. Ca(2+) serves as cofactor.

It localises to the cytoplasm. Functionally, probably phosphorylates lipids; the in vivo substrate is unknown. This is Probable lipid kinase YegS-like from Alcanivorax borkumensis (strain ATCC 700651 / DSM 11573 / NCIMB 13689 / SK2).